Consider the following 439-residue polypeptide: Xylose isomerase (439 aa).

Residues histidine 101 and aspartate 104 contribute to the active site. Mg(2+) contacts are provided by glutamate 232, glutamate 268, histidine 271, aspartate 296, aspartate 307, aspartate 309, and aspartate 339.

This sequence belongs to the xylose isomerase family. Homotetramer. Mg(2+) serves as cofactor.

The protein resides in the cytoplasm. It catalyses the reaction alpha-D-xylose = alpha-D-xylulofuranose. The protein is Xylose isomerase of Actinobacillus pleuropneumoniae serotype 5b (strain L20).